Consider the following 87-residue polypeptide: Small ribosomal subunit protein uS15c (87 aa).

It belongs to the universal ribosomal protein uS15 family. As to quaternary structure, part of the 30S ribosomal subunit.

It localises to the plastid. The protein resides in the chloroplast. This is Small ribosomal subunit protein uS15c (rps15) from Illicium oligandrum (Star anise).